A 202-amino-acid chain; its full sequence is Nudix hydrolase 13, mitochondrial (202 aa).

The Nudix hydrolase domain maps to 18-167; the sequence is NFRLVSGCIP…WMQSALEEFL (150 aa). The short motif at 65–86 is the Nudix box element; that stretch reads GGWEDDETVLEAASREAMEEAG. Residues Glu-80 and Glu-84 each contribute to the Mg(2+) site.

This sequence belongs to the Nudix hydrolase family. Monomer. Requires Mg(2+) as cofactor. In terms of tissue distribution, expressed in roots, leaves, stems and inflorescences.

The protein localises to the mitochondrion. Inhibited by fluoride. Mediates the hydrolysis of some nucleoside diphosphate derivatives. Can use diadenosine 5',5'''-P(1)P(6) hexaphosphate (Ap(6)A), diadenosine 5',5'''-P(1)P(5) pentaphosphate (Ap(5)A) and adenosine tetraphosphate (p(4)A) as substrates, but not diadenosine 5',5'''-P(1)P(4) tetraphosphate (Ap(4)A), diadenosine 5',5'''-P(1)P(3) triphosphate (Ap(3)A), deoxyribonucleoside triphosphates, ribonucleoside triphosphates, diphosphoinositol pentakisphosphate (PP-InsP(5)) and 5-phospho-alpha-D-ribosyl diphosphate (PRPP). The sequence is that of Nudix hydrolase 13, mitochondrial (NUDT13) from Arabidopsis thaliana (Mouse-ear cress).